A 708-amino-acid polypeptide reads, in one-letter code: DNA-directed RNA polymerase III subunit RPC5 (708 aa).

Residues 146–155 (DAKHREREAA) are compositionally biased toward basic and acidic residues. The segment at 146–170 (DAKHREREAANEAGDSSQDEAEDDV) is disordered. Phosphoserine occurs at positions 161 and 162. Lysine 171 is covalently cross-linked (Glycyl lysine isopeptide (Lys-Gly) (interchain with G-Cter in SUMO2)). Position 192 is a phosphoserine (serine 192). Tyrosine 224 is modified (phosphotyrosine). A Glycyl lysine isopeptide (Lys-Gly) (interchain with G-Cter in SUMO2) cross-link involves residue lysine 432. Positions 485–552 (QLRVPAVPPG…DSFNGHPPQG (68 aa)) are disordered. A Glycyl lysine isopeptide (Lys-Gly) (interchain with G-Cter in SUMO1); alternate cross-link involves residue lysine 498. Lysine 498 participates in a covalent cross-link: Glycyl lysine isopeptide (Lys-Gly) (interchain with G-Cter in SUMO2); alternate. Over residues 502–519 (VSEEGEEDEEQEAEEEPM) the composition is skewed to acidic residues. 2 positions are modified to phosphoserine: serine 503 and serine 522. The interval 556 to 708 (TPVARELKAF…MWYLKGTVQS (153 aa)) is required for Pol III complex stability. Residue lysine 659 forms a Glycyl lysine isopeptide (Lys-Gly) (interchain with G-Cter in SUMO2) linkage.

Component of the RNA polymerase III complex consisting of at least 17 subunits: a ten-subunit horseshoe-shaped catalytic core composed of POLR3A/RPC1, POLR3B/RPC2, POLR1C/RPAC1, POLR1D/RPAC2, POLR3K/RPC10, POLR2E/RPABC1, POLR2F/RPABC2, POLR2H/RPABC3, POLR2K/RPABC4 and POLR2L/RPABC5; the stalk composed of two subunits POLR3H/RPC8 and CRCP/RPC9, forming a structural mobile part that protrudes out of the core and functions primarily in transcription initiation; and additional subunits homologous to general transcription factors of the RNA polymerase II machinery, POLR3D/RPC4-POLR3E/RPC5 heterodimer and POLR3/CRPC3-POLR3F/RPC6-POLR3G/RPC7 heterotrimer.

Its subcellular location is the nucleus. DNA-dependent RNA polymerase catalyzes the transcription of DNA into RNA using the four ribonucleoside triphosphates as substrates. Specific peripheric component of RNA polymerase III (Pol III) which synthesizes small non-coding RNAs including 5S rRNA, snRNAs, tRNAs and miRNAs from at least 500 distinct genomic loci. Assembles with POLR3D/RPC4 forming a subcomplex that binds the Pol III core. Enables recruitment of Pol III at transcription initiation site and drives transcription initiation from both type 2 and type 3 DNA promoters. Required for efficient transcription termination and reinitiation. Plays a key role in sensing and limiting infection by intracellular bacteria and DNA viruses. Acts as a nuclear and cytosolic DNA sensor involved in innate immune response. Can sense non-self dsDNA that serves as template for transcription into dsRNA. The non-self RNA polymerase III transcripts, such as Epstein-Barr virus-encoded RNAs (EBERs) induce type I interferon and NF-kappa-B through the RIG-I pathway. The polypeptide is DNA-directed RNA polymerase III subunit RPC5 (Homo sapiens (Human)).